A 351-amino-acid polypeptide reads, in one-letter code: Uroporphyrinogen decarboxylase (351 aa).

Substrate-binding positions include 25 to 29 (RQAGR), Asp-74, Tyr-151, Ser-206, and His-325.

Belongs to the uroporphyrinogen decarboxylase family. As to quaternary structure, homodimer.

It localises to the cytoplasm. The catalysed reaction is uroporphyrinogen III + 4 H(+) = coproporphyrinogen III + 4 CO2. It participates in porphyrin-containing compound metabolism; protoporphyrin-IX biosynthesis; coproporphyrinogen-III from 5-aminolevulinate: step 4/4. Catalyzes the decarboxylation of four acetate groups of uroporphyrinogen-III to yield coproporphyrinogen-III. The sequence is that of Uroporphyrinogen decarboxylase from Chlorobium phaeobacteroides (strain DSM 266 / SMG 266 / 2430).